The sequence spans 70 residues: Small ribosomal subunit protein bS21 (70 aa).

The protein belongs to the bacterial ribosomal protein bS21 family.

The chain is Small ribosomal subunit protein bS21 from Wolinella succinogenes (strain ATCC 29543 / DSM 1740 / CCUG 13145 / JCM 31913 / LMG 7466 / NCTC 11488 / FDC 602W) (Vibrio succinogenes).